The chain runs to 254 residues: Type III pantothenate kinase 2 (254 aa).

6–13 (DMGNSHIH) contacts ATP. 107-110 (GADR) is a substrate binding site. Asp-109 acts as the Proton acceptor in catalysis. K(+) is bound at residue Asp-130. An ATP-binding site is contributed by Thr-133. Residue Thr-185 coordinates substrate.

Belongs to the type III pantothenate kinase family. Homodimer. NH4(+) is required as a cofactor. Requires K(+) as cofactor.

The protein localises to the cytoplasm. It catalyses the reaction (R)-pantothenate + ATP = (R)-4'-phosphopantothenate + ADP + H(+). Its pathway is cofactor biosynthesis; coenzyme A biosynthesis; CoA from (R)-pantothenate: step 1/5. In terms of biological role, catalyzes the phosphorylation of pantothenate (Pan), the first step in CoA biosynthesis. The polypeptide is Type III pantothenate kinase 2 (Francisella tularensis subsp. holarctica (strain LVS)).